The sequence spans 316 residues: Beta-ketoacyl-[acyl-carrier-protein] synthase III 1 (316 aa).

Residues C112 and H243 contribute to the active site. The tract at residues 244 to 248 (QANYR) is ACP-binding. Residue N273 is part of the active site.

This sequence belongs to the thiolase-like superfamily. FabH family. In terms of assembly, homodimer.

It localises to the cytoplasm. It catalyses the reaction malonyl-[ACP] + acetyl-CoA + H(+) = 3-oxobutanoyl-[ACP] + CO2 + CoA. Its pathway is lipid metabolism; fatty acid biosynthesis. In terms of biological role, catalyzes the condensation reaction of fatty acid synthesis by the addition to an acyl acceptor of two carbons from malonyl-ACP. Catalyzes the first condensation reaction which initiates fatty acid synthesis and may therefore play a role in governing the total rate of fatty acid production. Possesses both acetoacetyl-ACP synthase and acetyl transacylase activities. Its substrate specificity determines the biosynthesis of branched-chain and/or straight-chain of fatty acids. This is Beta-ketoacyl-[acyl-carrier-protein] synthase III 1 from Vibrio vulnificus (strain YJ016).